The primary structure comprises 491 residues: Interferon regulatory factor 3 (491 aa).

Positions 12–116 (KLRFGPWLLN…DPHKVYAVAS (105 aa)) form a DNA-binding region, IRF tryptophan pentad repeat.

Belongs to the IRF family. In terms of tissue distribution, widely expressed with higher expression in lung, spleen and intestine.

The protein localises to the cytoplasm. It is found in the nucleus. Functionally, key transcriptional regulator of type I interferon (IFN)-dependent immune responses which plays a critical role in the innate immune response against DNA and RNA viruses. Regulates the transcription of type I IFN genes (IFN-alpha and IFN-beta) and IFN-stimulated genes (ISG) by binding to an interferon-stimulated response element (ISRE) in their promoters. May activate transcription by complex formation with other transcriptional factors, possibly members of the STAT family. Binds specifically to the IFN-stimulated response element (ISRE) but not to the IRF-1 binding site PRD-I. The protein is Interferon regulatory factor 3 (IRF3) of Gallus gallus (Chicken).